A 151-amino-acid chain; its full sequence is Type 4 adapter protein IcmW (151 aa).

As to quaternary structure, the T4BSS is a complex nanomachine composed of several subcomplexes. This subunit is part of the Type IV Coupling Complex (T4CC), a subcomplex composed of the DotLMNYZ core and the IcmSW-LvgA adapter subunits, linked by the C-terminal tail of DotL. Interacts with IcmS. IcmS and IcmW form a stable complex. Interaction with IcmS greatly enhances the stability of IcmW. Interacts directly with the type 4 coupling protein DotL. Interacts with LvgA. Interacts with effector proteins.

It is found in the cytoplasm. Interaction with DotL is critical for the export of IcmSW-dependent substrates. In terms of biological role, component of the Dot/Icm type IVB secretion system (T4BSS), which is used to inject bacterial effector proteins into eukaryotic host cells. Part of a subcomplex which recruits effector proteins and delivers them to the core transmembrane subcomplex. The IcmS/IcmW protein complex plays an important role in protein translocation by interacting with multiple Dot/Icm effector proteins to facilitate their translocation into host cells. Interaction promotes conformational changes in the effector protein, which may facilitate display of a C-terminal translocation signal. May maintain the substrates in a translocation competent form. Required for intracellular growth in host cells, replicative phagosome formation and phagosome trafficking. In Legionella pneumophila subsp. pneumophila (strain Philadelphia 1 / ATCC 33152 / DSM 7513), this protein is Type 4 adapter protein IcmW.